A 263-amino-acid polypeptide reads, in one-letter code: Chromosomal replication initiator protein DnaA (263 aa).

Asp1 is a region of interest (domain I, interacts with DnaA modulators). Residue Asp1 is a region of interest, domain II. A domain III, AAA+ region region spans residues 1–177; that stretch reads DSGLGKTHLL…GIINKIEFSI (177 aa). ATP is bound by residues Gly3, Gly5, Lys6, and Thr7. The domain IV, binds dsDNA stretch occupies residues 178 to 263; sequence IQDNSAAPKI…KNYSEIGVAF (86 aa).

This sequence belongs to the DnaA family. As to quaternary structure, oligomerizes as a right-handed, spiral filament on DNA at oriC.

The protein resides in the cytoplasm. Functionally, plays an essential role in the initiation and regulation of chromosomal replication. ATP-DnaA binds to the origin of replication (oriC) to initiate formation of the DNA replication initiation complex once per cell cycle. Binds the DnaA box (a 9 base pair repeat at the origin) and separates the double-stranded (ds)DNA. Forms a right-handed helical filament on oriC DNA; dsDNA binds to the exterior of the filament while single-stranded (ss)DNA is stabiized in the filament's interior. The ATP-DnaA-oriC complex binds and stabilizes one strand of the AT-rich DNA unwinding element (DUE), permitting loading of DNA polymerase. After initiation quickly degrades to an ADP-DnaA complex that is not apt for DNA replication. Binds acidic phospholipids. This chain is Chromosomal replication initiator protein DnaA, found in Spiroplasma apis.